Here is a 444-residue protein sequence, read N- to C-terminus: MREILHIQGGQCGNQIGSKFWEVVCDEHGIDPTGQVLSESDLQLDRINVYYNEASGGRYVPRAVLMDLEPGTMDSVKTGPHGQIFRPDNFIFGQSGAGNNWAKGHYTEGAELIDSVLDVVRKEAENCECLQGFQVCHSLGGGTGSGMGTLLISKIREEYPDRMMLTFSVFPSPKVSDTVVEPYNATLSGHQLVENADECMVLDNEALYDICFRTLKLSTPSFGDLNHLISGTMSGVTCCLRFPGQLNSDLRKLAVNLIPFPRLHFFMVGFAPLTSRGSQQYRTLTVPELTQQMWDSKNMMCAADPRHGRYLTASAMFRGKMSTKEVDEQILNVQNKNSSYFVEWIPNNVKSSVCDIPPRGLSMSSTFIGNSTSIQEMFRRVSEQFTAMFRPKAFLHWYTGEGMDEMEFTEAESNMNDLVSEYQQYQDATAEEDDYDDGEGSTGD.

GTP contacts are provided by glutamine 11, glutamate 69, serine 138, glycine 142, threonine 143, glycine 144, asparagine 204, and asparagine 226. Glutamate 69 contacts Mg(2+). The interval 422-444 (YQQYQDATAEEDDYDDGEGSTGD) is disordered. The segment covering 429-444 (TAEEDDYDDGEGSTGD) has biased composition (acidic residues).

This sequence belongs to the tubulin family. In terms of assembly, dimer of alpha and beta chains. A typical microtubule is a hollow water-filled tube with an outer diameter of 25 nm and an inner diameter of 15 nM. Alpha-beta heterodimers associate head-to-tail to form protofilaments running lengthwise along the microtubule wall with the beta-tubulin subunit facing the microtubule plus end conferring a structural polarity. Microtubules usually have 13 protofilaments but different protofilament numbers can be found in some organisms and specialized cells. It depends on Mg(2+) as a cofactor. Found in areas of rapidly dividing tissues.

The protein localises to the cytoplasm. It is found in the cytoskeleton. In terms of biological role, tubulin is the major constituent of microtubules, a cylinder consisting of laterally associated linear protofilaments composed of alpha- and beta-tubulin heterodimers. Microtubules grow by the addition of GTP-tubulin dimers to the microtubule end, where a stabilizing cap forms. Below the cap, tubulin dimers are in GDP-bound state, owing to GTPase activity of alpha-tubulin. In Daucus carota (Wild carrot), this protein is Tubulin beta-2 chain (TUBB2).